The primary structure comprises 509 residues: Poly(A) RNA polymerase GLD2-A (509 aa).

Positions Pro88–Val107 are disordered. Mg(2+)-binding residues include Asp240 and Asp242. The PAP-associated domain maps to Leu409 to Asn462.

The protein belongs to the DNA polymerase type-B-like family. GLD2 subfamily. As to quaternary structure, component of a complex at least composed of cpeb1, cpsf1, tent2/gld2, pabpc1/ePAB, parn and sympk. Following oocyte maturation, parn is expelled from the complex. Interacts with rbfox2 and sympk. Mg(2+) is required as a cofactor. The cofactor is Mn(2+).

It is found in the cytoplasm. The catalysed reaction is RNA(n) + ATP = RNA(n)-3'-adenine ribonucleotide + diphosphate. Its function is as follows. Cytoplasmic poly(A) RNA polymerase that adds successive AMP monomers to the 3'-end of specific RNAs, forming a poly(A) tail. In contrast to the canonical nuclear poly(A) RNA polymerase, it only adds poly(A) to selected cytoplasmic mRNAs during oocyte maturation. Plays a central role during oocyte maturation by mediating polyadenylation of dormant mRNAs, which contain 5'AAUAAA-3' sequence in their 3'UTR. In immature oocytes, polyadenylation of poly(A) tails is counteracted by the ribonuclease parn. During maturation parn is excluded from the ribonucleoprotein complex, allowing poly(A) elongation and activation of mRNAs. May not play a role in replication-dependent histone mRNA degradation. The polypeptide is Poly(A) RNA polymerase GLD2-A (tent2-a) (Xenopus laevis (African clawed frog)).